Consider the following 186-residue polypeptide: Dynactin subunit 3 (186 aa).

At alanine 2 the chain carries N-acetylalanine. The stretch at 135–157 (QQQDQCVEITEESKALLEEYNKT) forms a coiled coil.

Belongs to the dynactin subunit 3 family. Subunit of dynactin, a multiprotein complex part of a tripartite complex with dynein and a adapter, such as BICDL1, BICD2 or HOOK3. The dynactin complex is built around ACTR1A/ACTB filament and consists of an actin-related filament composed of a shoulder domain, a pointed end and a barbed end. Its length is defined by its flexible shoulder domain. The soulder is composed of 2 DCTN1 subunits, 4 DCTN2 and 2 DCTN3. The 4 DCNT2 (via N-terminus) bind the ACTR1A filament and act as molecular rulers to determine the length. The pointed end is important for binding dynein-dynactin cargo adapters. Consists of 4 subunits: ACTR10, DCNT4, DCTN5 and DCTN6. The barbed end is composed of a CAPZA1:CAPZB heterodimers, which binds ACTR1A/ACTB filament and dynactin and stabilizes dynactin. In terms of tissue distribution, ubiquitously expressed. Highly expressed in muscle and pancreas and detected at lower levels in brain.

The protein resides in the cytoplasm. It is found in the cytoskeleton. Its subcellular location is the microtubule organizing center. It localises to the centrosome. The protein localises to the chromosome. The protein resides in the centromere. It is found in the kinetochore. Its subcellular location is the spindle. It localises to the cleavage furrow. The protein localises to the midbody. Part of the dynactin complex that activates the molecular motor dynein for ultra-processive transport along microtubules. Together with dynein may be involved in spindle assembly and cytokinesis. The chain is Dynactin subunit 3 from Homo sapiens (Human).